A 396-amino-acid polypeptide reads, in one-letter code: Lipid-A-disaccharide synthase (396 aa).

Belongs to the LpxB family.

The enzyme catalyses a lipid X + a UDP-2-N,3-O-bis[(3R)-3-hydroxyacyl]-alpha-D-glucosamine = a lipid A disaccharide + UDP + H(+). It functions in the pathway bacterial outer membrane biogenesis; LPS lipid A biosynthesis. Functionally, condensation of UDP-2,3-diacylglucosamine and 2,3-diacylglucosamine-1-phosphate to form lipid A disaccharide, a precursor of lipid A, a phosphorylated glycolipid that anchors the lipopolysaccharide to the outer membrane of the cell. This is Lipid-A-disaccharide synthase from Nitrobacter hamburgensis (strain DSM 10229 / NCIMB 13809 / X14).